Here is a 308-residue protein sequence, read N- to C-terminus: Mycothiol acetyltransferase (308 aa).

The interval 1–20 is disordered; it reads MTSDDTAQPSGARRIETRPD. 2 N-acetyltransferase domains span residues 15–152 and 165–308; these read IETR…RSLT and VTVR…RSET. E47 is a binding site for 1D-myo-inositol 2-(L-cysteinylamino)-2-deoxy-alpha-D-glucopyranoside. 91-93 contacts acetyl-CoA; the sequence is LVV. Positions 192, 231, and 240 each coordinate 1D-myo-inositol 2-(L-cysteinylamino)-2-deoxy-alpha-D-glucopyranoside. Acetyl-CoA contacts are provided by residues 244 to 246 and 251 to 257; these read VGV and QGGGLGK. Y278 lines the 1D-myo-inositol 2-(L-cysteinylamino)-2-deoxy-alpha-D-glucopyranoside pocket.

The protein belongs to the acetyltransferase family. MshD subfamily. As to quaternary structure, monomer.

It catalyses the reaction 1D-myo-inositol 2-(L-cysteinylamino)-2-deoxy-alpha-D-glucopyranoside + acetyl-CoA = mycothiol + CoA + H(+). Its function is as follows. Catalyzes the transfer of acetyl from acetyl-CoA to desacetylmycothiol (Cys-GlcN-Ins) to form mycothiol. The chain is Mycothiol acetyltransferase from Streptomyces scabiei (strain 87.22).